A 79-amino-acid polypeptide reads, in one-letter code: Acyl carrier protein (79 aa).

A Carrier domain is found at 2–77 (SDIEARVKKI…LAIDYAKSHA (76 aa)). O-(pantetheine 4'-phosphoryl)serine is present on S37.

Belongs to the acyl carrier protein (ACP) family. 4'-phosphopantetheine is transferred from CoA to a specific serine of apo-ACP by AcpS. This modification is essential for activity because fatty acids are bound in thioester linkage to the sulfhydryl of the prosthetic group.

It is found in the cytoplasm. It participates in lipid metabolism; fatty acid biosynthesis. Carrier of the growing fatty acid chain in fatty acid biosynthesis. The chain is Acyl carrier protein from Methylibium petroleiphilum (strain ATCC BAA-1232 / LMG 22953 / PM1).